The chain runs to 160 residues: Large ribosomal subunit protein uL30m (160 aa).

The transit peptide at 1 to 34 directs the protein to the mitochondrion; it reads MAGVLRSVFQRPPGRLQTVKKGAESLIGTEWIRH. The tract at residues 45-64 is disordered; it reads VFQPRPEDHEKYGGDPQNPH.

This sequence belongs to the universal ribosomal protein uL30 family. Component of the mitochondrial ribosome large subunit (39S) which comprises a 16S rRNA and about 50 distinct proteins.

The protein resides in the mitochondrion. The polypeptide is Large ribosomal subunit protein uL30m (Mrpl30) (Rattus norvegicus (Rat)).